Consider the following 23-residue polypeptide: Pseudin-3 (23 aa).

Expressed by the skin glands.

It localises to the secreted. Its function is as follows. Possesses antifungal activity against C.albicans and is also active against E.coli and S.aureus. The polypeptide is Pseudin-3 (Pseudis paradoxa (Paradoxical frog)).